The sequence spans 235 residues: Cell division protein FtsQ (235 aa).

Residues 1–6 (MERLTR) lie on the Cytoplasmic side of the membrane. A helical transmembrane segment spans residues 7–25 (WLLVMMAMLLAASGLVWFY). Residues 26-235 (NSNHLPVKQV…DGLPEKESEE (210 aa)) lie on the Periplasmic side of the membrane. The region spanning 30–99 (LPVKQVSLKG…DTVEVVLTER (70 aa)) is the POTRA domain.

The protein belongs to the FtsQ/DivIB family. FtsQ subfamily. In terms of assembly, part of a complex composed of FtsB, FtsL and FtsQ.

Its subcellular location is the cell inner membrane. Essential cell division protein. May link together the upstream cell division proteins, which are predominantly cytoplasmic, with the downstream cell division proteins, which are predominantly periplasmic. May control correct divisome assembly. The protein is Cell division protein FtsQ of Neisseria meningitidis serogroup B (strain ATCC BAA-335 / MC58).